Here is a 227-residue protein sequence, read N- to C-terminus: PKHD-type hydroxylase PHZ_c0292 (227 aa).

Residues 78–178 (VVFPPLFNRY…RVCSFFWIQS (101 aa)) enclose the Fe2OG dioxygenase domain. His96, Asp98, and His159 together coordinate Fe cation. Position 169 (Arg169) interacts with 2-oxoglutarate.

The cofactor is Fe(2+). Requires L-ascorbate as cofactor.

This Phenylobacterium zucineum (strain HLK1) protein is PKHD-type hydroxylase PHZ_c0292.